A 308-amino-acid polypeptide reads, in one-letter code: tRNA pseudouridine synthase B (308 aa).

Asp47 (nucleophile) is an active-site residue.

The protein belongs to the pseudouridine synthase TruB family. Type 1 subfamily.

It catalyses the reaction uridine(55) in tRNA = pseudouridine(55) in tRNA. Responsible for synthesis of pseudouridine from uracil-55 in the psi GC loop of transfer RNAs. The polypeptide is tRNA pseudouridine synthase B (Xanthomonas euvesicatoria pv. vesicatoria (strain 85-10) (Xanthomonas campestris pv. vesicatoria)).